A 164-amino-acid polypeptide reads, in one-letter code: MAGISQHGKAFIRPKAKAHLLIVEARFHDDLADALLDGATSALEEAGATYDVVTVPGSLEIPAVITFALDGAAEGGTNYDGFVALGTIIRGDTYHFDIVANESSRALMDMSVQDSVCIGNGILTTENDAQAWTRAKRSEGDKGGFAARAALTMIALKEQLGARS.

Residues Phe-27, 58–60 (SLE), and 87–89 (TII) each bind 5-amino-6-(D-ribitylamino)uracil. 92-93 (DT) contributes to the (2S)-2-hydroxy-3-oxobutyl phosphate binding site. Residue His-95 is the Proton donor of the active site. Position 120 (Asn-120) interacts with 5-amino-6-(D-ribitylamino)uracil. Arg-134 contacts (2S)-2-hydroxy-3-oxobutyl phosphate.

This sequence belongs to the DMRL synthase family. As to quaternary structure, homopentamer.

The catalysed reaction is (2S)-2-hydroxy-3-oxobutyl phosphate + 5-amino-6-(D-ribitylamino)uracil = 6,7-dimethyl-8-(1-D-ribityl)lumazine + phosphate + 2 H2O + H(+). Its pathway is cofactor biosynthesis; riboflavin biosynthesis; riboflavin from 2-hydroxy-3-oxobutyl phosphate and 5-amino-6-(D-ribitylamino)uracil: step 1/2. Catalyzes the formation of 6,7-dimethyl-8-ribityllumazine by condensation of 5-amino-6-(D-ribitylamino)uracil with 3,4-dihydroxy-2-butanone 4-phosphate. This is the penultimate step in the biosynthesis of riboflavin. This is 6,7-dimethyl-8-ribityllumazine synthase 1 (ribH1) from Mesorhizobium japonicum (strain LMG 29417 / CECT 9101 / MAFF 303099) (Mesorhizobium loti (strain MAFF 303099)).